Consider the following 95-residue polypeptide: Small ribosomal subunit protein bS6 (95 aa).

Belongs to the bacterial ribosomal protein bS6 family.

Functionally, binds together with bS18 to 16S ribosomal RNA. The polypeptide is Small ribosomal subunit protein bS6 (Shouchella clausii (strain KSM-K16) (Alkalihalobacillus clausii)).